The sequence spans 268 residues: Hydroxyethylthiazole kinase (268 aa).

M45 is a substrate binding site. R121 and T167 together coordinate ATP. G194 is a binding site for substrate.

It belongs to the Thz kinase family. Mg(2+) serves as cofactor.

It catalyses the reaction 5-(2-hydroxyethyl)-4-methylthiazole + ATP = 4-methyl-5-(2-phosphooxyethyl)-thiazole + ADP + H(+). The protein operates within cofactor biosynthesis; thiamine diphosphate biosynthesis; 4-methyl-5-(2-phosphoethyl)-thiazole from 5-(2-hydroxyethyl)-4-methylthiazole: step 1/1. Its function is as follows. Catalyzes the phosphorylation of the hydroxyl group of 4-methyl-5-beta-hydroxyethylthiazole (THZ). This Bacillus cereus (strain ATCC 10987 / NRS 248) protein is Hydroxyethylthiazole kinase.